The sequence spans 420 residues: Glucose-1-phosphate adenylyltransferase (420 aa).

Alpha-D-glucose 1-phosphate-binding positions include Tyr107, Gly173, Glu188–Lys189, and Ser206.

The protein belongs to the bacterial/plant glucose-1-phosphate adenylyltransferase family. Homotetramer.

The catalysed reaction is alpha-D-glucose 1-phosphate + ATP + H(+) = ADP-alpha-D-glucose + diphosphate. The protein operates within glycan biosynthesis; glycogen biosynthesis. Its function is as follows. Involved in the biosynthesis of ADP-glucose, a building block required for the elongation reactions to produce glycogen. Catalyzes the reaction between ATP and alpha-D-glucose 1-phosphate (G1P) to produce pyrophosphate and ADP-Glc. This is Glucose-1-phosphate adenylyltransferase from Shewanella baltica (strain OS185).